An 80-amino-acid chain; its full sequence is Serine palmitoyltransferase small subunit A (80 aa).

Residues 1–21 (MKVSCEDINGPRSSLSRAWNH) lie on the Cytoplasmic side of the membrane. A helical membrane pass occupies residues 22–38 (MSWLYYQYLLVTALYML). Residues 39–43 (EPWER) are Lumenal-facing. Residues 44–66 (TIFNSMLVSIVGMALYTGYIFMP) form a helical membrane-spanning segment. Residues 67–80 (QHILAILHYFEIVQ) lie on the Cytoplasmic side of the membrane.

It belongs to the SPTSS family. SPTSSA subfamily. As to quaternary structure, component of the serine palmitoyltransferase (SPT) complex, which is composed of SPTLC1, SPTLC2 or SPTLC3 and SPTSSA or SPTSSB. The heterodimer consisting of SPTLC1 and SPTLC2/SPTLC3 forms the catalytic core of the enzyme, while SPTSSA or SPTSSB subunits determine substrate specificity. SPT also interacts with ORMDL proteins, especially ORMDL3, which negatively regulate SPT activity in the presence of ceramides.

It localises to the endoplasmic reticulum membrane. It participates in lipid metabolism; sphingolipid metabolism. Component of the serine palmitoyltransferase multisubunit enzyme (SPT) that catalyzes the initial and rate-limiting step in sphingolipid biosynthesis by condensing L-serine and activated acyl-CoA (most commonly palmitoyl-CoA) to form long-chain bases. The SPT complex is composed of SPTLC1, SPTLC2 or SPTLC3 and SPTSSA or SPTSSB. Within this complex, the heterodimer consisting of SPTLC1 and SPTLC2/SPTLC3 forms the catalytic core. Within the SPT complex, SPTSSA stimulates the catalytic activity and plays a role in substrate specificity, which depends upon the overall complex composition. The SPTLC1-SPTLC2-SPTSSA complex shows a strong preference for C16-CoA substrate, while the SPTLC1-SPTLC3-SPTSSA isozyme uses both C14-CoA and C16-CoA as substrates, with a slight preference for C14-CoA. Independently of its action as a SPT component, may be involved in MBOAT7 localization to mitochondria-associated membranes, a membrane bridge between the endoplasmic reticulum and mitochondria, may hence affect MBOAT7-catalyzed incorporation of arachidonic acid into phosphatidylinositol. This Xenopus tropicalis (Western clawed frog) protein is Serine palmitoyltransferase small subunit A (sptssa).